The chain runs to 96 residues: Muconolactone Delta-isomerase 2 (96 aa).

Belongs to the muconolactone Delta-isomerase family. Homodecamer.

It carries out the reaction (S)-muconolactone = (4,5-dihydro-5-oxofuran-2-yl)-acetate. Its pathway is aromatic compound metabolism; beta-ketoadipate pathway; 5-oxo-4,5-dihydro-2-furylacetate from catechol: step 3/3. The protein is Muconolactone Delta-isomerase 2 (catC2) of Acinetobacter lwoffii.